The chain runs to 401 residues: cAMP-dependent protein kinase type II-alpha regulatory subunit (401 aa).

Ser2 carries the N-acetylserine modification. A dimerization and phosphorylation region spans residues 2–135; sequence SHIQIPPGLT…RLQEACKDIL (134 aa). Residues Ser47, Ser74, Ser76, and Ser96 each carry the phosphoserine modification. The tract at residues 61–83 is disordered; the sequence is ESSAVPVIEEDGESDSDSEDADL. The segment covering 68–83 has biased composition (acidic residues); the sequence is IEEDGESDSDSEDADL. 3',5'-cyclic AMP is bound by residues 136–257, Glu205, Arg214, 258–401, Glu335, and Arg344; these read LFKN…ESVP and LFKS…DPGQ. A Phosphothreonine; by PDPK1 modification is found at Thr212. 2 positions are modified to phosphoserine: Ser347 and Ser392.

Belongs to the cAMP-dependent kinase regulatory chain family. In terms of assembly, the inactive form of the enzyme is composed of two regulatory chains and two catalytic chains. Activation by cAMP produces two active catalytic monomers and a regulatory dimer that binds four cAMP molecules. Interacts with AKAP4. Interacts with CBFA2T3. Interacts with the phosphorylated form of PJA2. Interacts with MYRIP. This interaction may link PKA to components of the exocytosis machinery, thus facilitating exocytosis, including insulin release. Forms a complex composed of PRKAR2A, GSK3B and GSKIP through GSKIP interaction; facilitates PKA-induced phosphorylation and regulates GSK3B activity. Interacts with ADCY8; inhibits adenylate cyclase activity through PKA phosphorylation. Phosphorylated by the activated catalytic chain. As to expression, four types of regulatory chains are found: I-alpha, I-beta, II-alpha, and II-beta. Their expression varies among tissues and is in some cases constitutive and in others inducible.

The protein localises to the cytoplasm. Its subcellular location is the cell membrane. Functionally, regulatory subunit of the cAMP-dependent protein kinases involved in cAMP signaling in cells. Type II regulatory chains mediate membrane association by binding to anchoring proteins, including the MAP2 kinase. This Mus musculus (Mouse) protein is cAMP-dependent protein kinase type II-alpha regulatory subunit (Prkar2a).